Here is a 323-residue protein sequence, read N- to C-terminus: COP9 signalosome complex subunit 6 (323 aa).

Positions 37-170 constitute an MPN domain; the sequence is VALHPLVILN…VSVFESVIDI (134 aa).

The protein belongs to the peptidase M67A family. CSN6 subfamily. As to quaternary structure, component of the CSN complex, composed of COPS1/GPS1, COPS2, COPS3, COPS4, COPS5, COPS6, COPS7 (COPS7A or COPS7B), COPS8 and COPS9. In the complex, it probably interacts directly with COPS2, COPS4, COPS5, COPS7 (COPS7A or COPS7B) and COPS9. Interacts with the translation initiation factor EIF3S6. Interacts weakly with RBX1. Directly interacts with COP1 and 14-3-3 protein sigma/SFN. Interacts with ERCC6.

The protein localises to the cytoplasm. It is found in the nucleus. In terms of biological role, component of the COP9 signalosome complex (CSN), a complex involved in various cellular and developmental processes. The CSN complex is an essential regulator of the ubiquitin (Ubl) conjugation pathway by mediating the deneddylation of the cullin subunits of SCF-type E3 ligase complexes, leading to decrease the Ubl ligase activity of SCF-type complexes such as SCF, CSA or DDB2. The complex is also involved in phosphorylation of p53/TP53, c-jun/JUN, IkappaBalpha/NFKBIA, ITPK1 and IRF8, possibly via its association with CK2 and PKD kinases. CSN-dependent phosphorylation of TP53 and JUN promotes and protects degradation by the Ubl system, respectively. Has some glucocorticoid receptor-responsive activity. Stabilizes COP1 through reducing COP1 auto-ubiquitination and decelerating COP1 turnover rate, hence regulates the ubiquitination of COP1 targets, including SFN. This Sus scrofa (Pig) protein is COP9 signalosome complex subunit 6 (COPS6).